A 292-amino-acid chain; its full sequence is Release factor glutamine methyltransferase (292 aa).

Residues 126 to 130 (GTGTG), Asp157, Trp184, and Asn198 each bind S-adenosyl-L-methionine. 198-201 (NPPY) contacts substrate.

It belongs to the protein N5-glutamine methyltransferase family. PrmC subfamily.

The catalysed reaction is L-glutaminyl-[peptide chain release factor] + S-adenosyl-L-methionine = N(5)-methyl-L-glutaminyl-[peptide chain release factor] + S-adenosyl-L-homocysteine + H(+). Methylates the class 1 translation termination release factors RF1/PrfA and RF2/PrfB on the glutamine residue of the universally conserved GGQ motif. The polypeptide is Release factor glutamine methyltransferase (Haemophilus influenzae (strain ATCC 51907 / DSM 11121 / KW20 / Rd)).